A 602-amino-acid chain; its full sequence is Elongation factor 4 (602 aa).

The 182-residue stretch at 8–189 folds into the tr-type G domain; sequence KNIRNFSIIA…KIITTIPAPS (182 aa). GTP is bound by residues 20–25 and 136–139; these read DHGKST and NKID.

The protein belongs to the TRAFAC class translation factor GTPase superfamily. Classic translation factor GTPase family. LepA subfamily.

The protein localises to the cell inner membrane. It carries out the reaction GTP + H2O = GDP + phosphate + H(+). Required for accurate and efficient protein synthesis under certain stress conditions. May act as a fidelity factor of the translation reaction, by catalyzing a one-codon backward translocation of tRNAs on improperly translocated ribosomes. Back-translocation proceeds from a post-translocation (POST) complex to a pre-translocation (PRE) complex, thus giving elongation factor G a second chance to translocate the tRNAs correctly. Binds to ribosomes in a GTP-dependent manner. The protein is Elongation factor 4 of Helicobacter pylori (strain G27).